A 352-amino-acid chain; its full sequence is MRKKAISRILALVVPVLLSLNSQAFATSVQDESPVTGSAVEAVHTVPSTVAAPVAGHAEAAAGQAAKAEEKPGDLIMHHILDNSTFSFEPFGEVHLPHLEVAGFDISITKHVVMIWLAAILLVVIASAAGASVKKMSANQAPKGVANVFESLVDFISNDVAKPNIGHGYEKFLPYLLTVFFFILVCNLLGLIPYGATATGNINVTLTLSVFTFVITQFSAFKAQGVKGYLQHLTAGTHWALWIIMVPIEILGQFTKPFALTIRLFANMTAGHIIILSLFFISFILKSYIVAVAVSIPFAIFIYLLELFVAFLQAYVFTMLSALFIGLATAHSDSHDGHELEATARHGDGLTV.

Positions 1-26 (MRKKAISRILALVVPVLLSLNSQAFA) are cleaved as a signal peptide. A run of 7 helical transmembrane segments spans residues 112-132 (VVMIWLAAILLVVIASAAGAS), 172-192 (FLPYLLTVFFFILVCNLLGLI), 195-215 (GATATGNINVTLTLSVFTFVI), 232-252 (HLTAGTHWALWIIMVPIEILG), 264-284 (LFANMTAGHIIILSLFFISFI), 289-309 (IVAVAVSIPFAIFIYLLELFV), and 310-330 (AFLQAYVFTMLSALFIGLATA).

Belongs to the ATPase A chain family. In terms of assembly, F-type ATPases have 2 components, CF(1) - the catalytic core - and CF(0) - the membrane proton channel. CF(1) has five subunits: alpha(3), beta(3), gamma(1), delta(1), epsilon(1). CF(0) has four main subunits: a, b, b' and c.

The protein resides in the cell inner membrane. Functionally, key component of the proton channel; it plays a direct role in the translocation of protons across the membrane. The sequence is that of ATP synthase subunit a 2 from Chlorobaculum tepidum (strain ATCC 49652 / DSM 12025 / NBRC 103806 / TLS) (Chlorobium tepidum).